We begin with the raw amino-acid sequence, 663 residues long: LEAF RUST 10 DISEASE-RESISTANCE LOCUS RECEPTOR-LIKE PROTEIN KINASE-like 1.4 (663 aa).

The N-terminal stretch at 1–25 (MYYPLSSSLMFFILFSLFYHLPCES) is a signal peptide. Residues 26 to 241 (SKCESLFQCG…TSLSIGAKAG (216 aa)) are Extracellular-facing. 5 N-linked (GlcNAc...) asparagine glycosylation sites follow: asparagine 36, asparagine 64, asparagine 106, asparagine 137, and asparagine 208. The helical transmembrane segment at 242-262 (IAVASVSGLAILLLAGLFLCI) threads the bilayer. Topologically, residues 263–663 (RRRRKTQDAQ…TSSSDTAASL (401 aa)) are cytoplasmic. The interval 282–304 (SYSSRDTSRNPTSTTISSSSNHS) is disordered. A compositionally biased stretch (low complexity) spans 290 to 304 (RNPTSTTISSSSNHS). In terms of domain architecture, Protein kinase spans 334 to 609 (ENFSRELGDG…DEIVEILRGI (276 aa)). ATP-binding positions include 340-348 (LGDGGFGTV) and lysine 362. Residue aspartate 458 is the Proton acceptor of the active site. A disordered region spans residues 637 to 663 (LLRNSVPPPISPETDKWTSSSDTAASL). A compositionally biased stretch (polar residues) spans 653–663 (WTSSSDTAASL).

Belongs to the protein kinase superfamily. Ser/Thr protein kinase family.

Its subcellular location is the cell membrane. The catalysed reaction is L-seryl-[protein] + ATP = O-phospho-L-seryl-[protein] + ADP + H(+). It catalyses the reaction L-threonyl-[protein] + ATP = O-phospho-L-threonyl-[protein] + ADP + H(+). This is LEAF RUST 10 DISEASE-RESISTANCE LOCUS RECEPTOR-LIKE PROTEIN KINASE-like 1.4 from Arabidopsis thaliana (Mouse-ear cress).